A 360-amino-acid polypeptide reads, in one-letter code: MKPSMIKKLATLSERLDELNRLLSSEDVTNDIDNYRKITREHAEITPIVEQFRAYEQAEIDIKEAQAMLADPEMKEFAQEETEAGKQKLDDIEKQLQKLLLPKDPNDERNIFLEIRAGTGGDESALFAGDLFRMYSRYAERQGWKVEIVSANESEVGGYKEIIAKIEGFGAYSKLKFESGGHRVQRVPETETQGRIHTSACTVAVLPEVDEVSDVTINPADIRIDTFRASGAGGQHINKTDSAVRITHFPTGIVVECQDGRSQHSNKAQAMQVLAARIKAKQVDEQQSKIASERRSLIGSGDRSERIRTYNYPQGRITDHRINLTLYKIDAITEGDMDELINALAAEHQADLLATLGEDN.

Gln235 carries the N5-methylglutamine modification.

This sequence belongs to the prokaryotic/mitochondrial release factor family. Methylated by PrmC. Methylation increases the termination efficiency of RF1.

Its subcellular location is the cytoplasm. In terms of biological role, peptide chain release factor 1 directs the termination of translation in response to the peptide chain termination codons UAG and UAA. This chain is Peptide chain release factor 1, found in Methylobacillus flagellatus (strain ATCC 51484 / DSM 6875 / VKM B-1610 / KT).